Here is an 884-residue protein sequence, read N- to C-terminus: Cadherin-1 (884 aa).

A signal peptide spans 1–23; that stretch reads MGARCRSFSALLLLLQVSSWLCQ. The propeptide occupies 24-156; it reads ELEPESCSPG…VYPGLRRQKR (133 aa). The interval 119–139 is disordered; that stretch reads KSMGHHHHRHHHRDPASESNP. Residues 121–131 are compositionally biased toward basic residues; it reads MGHHHHRHHHR. 5 Cadherin domains span residues 157-264, 265-377, 378-488, 489-595, and 596-699; these read DWVI…RPEF, TQEV…APVF, NPST…APIF, MPAE…DNAP, and IPEP…NCMK. Topologically, residues 157 to 709 are extracellular; sequence DWVIPPISCP…AGIVAAGLQV (553 aa). D259 provides a ligand contact to Ca(2+). S282 and S287 each carry an O-linked (Man...) serine glycan. D290 is a binding site for Ca(2+). 4 O-linked (Man...) threonine glycosylation sites follow: T360, T472, T474, and T511. Residue N560 is glycosylated (N-linked (GlcNAc...) asparagine). T578, T580, and T582 each carry an O-linked (Man...) threonine glycan. N-linked (GlcNAc...) asparagine glycosylation occurs at N639. The helical transmembrane segment at 710-733 threads the bilayer; the sequence is PAILGILGGILALLILILLLLLFL. Residues 734–884 lie on the Cytoplasmic side of the membrane; the sequence is RRRTVVKEPL…ADMYGGGEDD (151 aa). The interval 749-808 is disordered; sequence DTRDNVYYYDEEGGGEEDQDFDLSQLHRGLDARPEVTRNDVAPTLMSVPQYRPRPANPDE. A phosphotyrosine; by SRC mark is found at Y755, Y756, and Y757. The segment covering 757-769 has biased composition (acidic residues); that stretch reads YDEEGGGEEDQDF. The required for binding CTNND1 and PSEN1 stretch occupies residues 760 to 771; that stretch reads EGGGEEDQDFDL. S772 is subject to Phosphoserine. Residues 776–786 show a composition bias toward basic and acidic residues; it reads RGLDARPEVTR. Phosphoserine is present on residues S795, S840, S842, and S848. Positions 813-884 are required for binding alpha, beta and gamma catenins; it reads IDENLKAADS…ADMYGGGEDD (72 aa).

Homodimer; disulfide-linked. Component of an E-cadherin/ catenin adhesion complex composed of at least E-cadherin/CDH1, beta-catenin/CTNNB1 or gamma-catenin/JUP, and potentially alpha-catenin/CTNNA1; the complex is located to adherens junctions. Found in a complex composed of CDH1, RAP1A and PKP3; PKP3 acts as a scaffold protein within the complex, the complex is required for CDH1 localization to mature desmosome cell junctions. Interacts with the TRPV4 and CTNNB1 complex. Interacts with CTNND1. The stable association of CTNNA1 is controversial as CTNNA1 was shown not to bind to F-actin when assembled in the complex. Alternatively, the CTNNA1-containing complex may be linked to F-actin by other proteins such as LIMA1. Interaction with PSEN1, cleaves CDH1 resulting in the disassociation of cadherin-based adherens junctions (CAJs). Interacts with AJAP1 and DLGAP5. Interacts with TBC1D2. Interacts with LIMA1. Interacts with CAV1. Interacts with PIP5K1C. Interacts with RAB8B. Interacts with DDR1; this stabilizes CDH1 at the cell surface and inhibits its internalization. Interacts with RAPGEF2. Interacts with KLRG1. Forms a ternary complex composed of ADAM10, CADH1 and EPHA4; within the complex, CADH1 is cleaved by ADAM10 which disrupts adherens junctions. Interacts with SPEF1. Interacts with CTNNB1 and PKP2. Interacts with AMOTL2; the interaction may facilitate binding of radial actin fibers to cell junction complexes. Interacts with DSG3; the interaction is required for CDH1 localization to developing adherens junctions. In terms of processing, during apoptosis or with calcium influx, cleaved by a membrane-bound metalloproteinase (ADAM10), PS1/gamma-secretase and caspase-3. Processing by the metalloproteinase, induced by calcium influx, causes disruption of cell-cell adhesion and the subsequent release of beta-catenin into the cytoplasm. The residual membrane-tethered cleavage product is rapidly degraded via an intracellular proteolytic pathway. Cleavage by caspase-3 releases the cytoplasmic tail resulting in disintegration of the actin microfilament system. The gamma-secretase-mediated cleavage promotes disassembly of adherens junctions. During development of the cochlear organ of Corti, cleavage by ADAM10 at adherens junctions promotes pillar cell separation. Post-translationally, O-glycosylated. O-manosylated by TMTC1, TMTC2, TMTC3 or TMTC4. Ser-287 and Thr-511 are O-manosylated by TMTC2 or TMTC4 but not TMTC1 or TMTC3. N-glycosylation at Asn-639 is essential for expression, folding and trafficking. Addition of bisecting N-acetylglucosamine by MGAT3 modulates its cell membrane location. In terms of processing, ubiquitinated by a SCF complex containing SKP2, which requires prior phosphorylation by CK1/CSNK1A1. Ubiquitinated by CBLL1/HAKAI, requires prior phosphorylation at Tyr-756. As to expression, expressed in inner and outer pillar cells of the organ of Corti (at protein level). Expressed in granuloma macrophages (at protein level). Expressed in the epidermal keratinocytes of the skin from birth (at protein level). Expressed in non-neural epithelial tissues.

Its subcellular location is the cell junction. It is found in the adherens junction. It localises to the cell membrane. The protein resides in the endosome. The protein localises to the golgi apparatus. Its subcellular location is the trans-Golgi network. It is found in the cytoplasm. It localises to the desmosome. In terms of biological role, cadherins are calcium-dependent cell adhesion proteins. They preferentially interact with themselves in a homophilic manner in connecting cells; cadherins may thus contribute to the sorting of heterogeneous cell types. CDH1 is involved in mechanisms regulating cell-cell adhesions, mobility and proliferation of epithelial cells. Promotes organization of radial actin fiber structure and cellular response to contractile forces, via its interaction with AMOTL2 which facilitates anchoring of radial actin fibers to CDH1 junction complexes at the cell membrane. Plays a role in the early stages of desmosome cell-cell junction formation via facilitating the recruitment of DSG2 and DSP to desmosome plaques. Has a potent invasive suppressor role. It is a ligand for integrin alpha-E/beta-7. Functionally, E-Cad/CTF2 promotes non-amyloidogenic degradation of Abeta precursors. Has a strong inhibitory effect on APP C99 and C83 production. (Microbial infection) Does not function as a receptor for L.monocytogenes internalin A (InlA); mutating a single surface-exposed residue confers receptor activity to this protein and promotes uptake of the bacteria. The chain is Cadherin-1 (Cdh1) from Mus musculus (Mouse).